The primary structure comprises 690 residues: Elongation factor G (690 aa).

Positions 8–283 (EDYRNFGIMA…AVVAYLPSPL (276 aa)) constitute a tr-type G domain. Residues 17-24 (AHIDAGKT), 81-85 (DTPGH), and 135-138 (NKMD) each bind GTP.

It belongs to the TRAFAC class translation factor GTPase superfamily. Classic translation factor GTPase family. EF-G/EF-2 subfamily.

It is found in the cytoplasm. In terms of biological role, catalyzes the GTP-dependent ribosomal translocation step during translation elongation. During this step, the ribosome changes from the pre-translocational (PRE) to the post-translocational (POST) state as the newly formed A-site-bound peptidyl-tRNA and P-site-bound deacylated tRNA move to the P and E sites, respectively. Catalyzes the coordinated movement of the two tRNA molecules, the mRNA and conformational changes in the ribosome. This chain is Elongation factor G, found in Nitrobacter winogradskyi (strain ATCC 25391 / DSM 10237 / CIP 104748 / NCIMB 11846 / Nb-255).